Here is a 227-residue protein sequence, read N- to C-terminus: Cytochrome c oxidase subunit 2 (227 aa).

The Mitochondrial intermembrane segment spans residues 1 to 14 (MAYPFQLGLQDATS). Residues 15 to 45 (PIMEELMNFHDHTLMIVFLISSLVLYIISLM) traverse the membrane as a helical segment. Topologically, residues 46-59 (LTTKLTHTSTMDAQ) are mitochondrial matrix. A helical membrane pass occupies residues 60-87 (EVETIWTILPAVILILIALPSLRILYMM). Residues 88–227 (DEINNPVLTV…NFENWSTSMI (140 aa)) lie on the Mitochondrial intermembrane side of the membrane. The Cu cation site is built by His-161, Cys-196, Glu-198, Cys-200, His-204, and Met-207. Residue Glu-198 coordinates Mg(2+).

The protein belongs to the cytochrome c oxidase subunit 2 family. As to quaternary structure, component of the cytochrome c oxidase (complex IV, CIV), a multisubunit enzyme composed of 14 subunits. The complex is composed of a catalytic core of 3 subunits MT-CO1, MT-CO2 and MT-CO3, encoded in the mitochondrial DNA, and 11 supernumerary subunits COX4I, COX5A, COX5B, COX6A, COX6B, COX6C, COX7A, COX7B, COX7C, COX8 and NDUFA4, which are encoded in the nuclear genome. The complex exists as a monomer or a dimer and forms supercomplexes (SCs) in the inner mitochondrial membrane with NADH-ubiquinone oxidoreductase (complex I, CI) and ubiquinol-cytochrome c oxidoreductase (cytochrome b-c1 complex, complex III, CIII), resulting in different assemblies (supercomplex SCI(1)III(2)IV(1) and megacomplex MCI(2)III(2)IV(2)). Found in a complex with TMEM177, COA6, COX18, COX20, SCO1 and SCO2. Interacts with TMEM177 in a COX20-dependent manner. Interacts with COX20. Interacts with COX16. Requires Cu cation as cofactor.

Its subcellular location is the mitochondrion inner membrane. The enzyme catalyses 4 Fe(II)-[cytochrome c] + O2 + 8 H(+)(in) = 4 Fe(III)-[cytochrome c] + 2 H2O + 4 H(+)(out). In terms of biological role, component of the cytochrome c oxidase, the last enzyme in the mitochondrial electron transport chain which drives oxidative phosphorylation. The respiratory chain contains 3 multisubunit complexes succinate dehydrogenase (complex II, CII), ubiquinol-cytochrome c oxidoreductase (cytochrome b-c1 complex, complex III, CIII) and cytochrome c oxidase (complex IV, CIV), that cooperate to transfer electrons derived from NADH and succinate to molecular oxygen, creating an electrochemical gradient over the inner membrane that drives transmembrane transport and the ATP synthase. Cytochrome c oxidase is the component of the respiratory chain that catalyzes the reduction of oxygen to water. Electrons originating from reduced cytochrome c in the intermembrane space (IMS) are transferred via the dinuclear copper A center (CU(A)) of subunit 2 and heme A of subunit 1 to the active site in subunit 1, a binuclear center (BNC) formed by heme A3 and copper B (CU(B)). The BNC reduces molecular oxygen to 2 water molecules using 4 electrons from cytochrome c in the IMS and 4 protons from the mitochondrial matrix. This Apodemus mystacinus (Broad-toothed field mouse) protein is Cytochrome c oxidase subunit 2 (MT-CO2).